The sequence spans 290 residues: Small ribosomal subunit biogenesis GTPase RsgA (290 aa).

One can recognise a CP-type G domain in the interval 62 to 219 (RTCLKRPAVA…VADTPGFSRL (158 aa)). Residues 111–114 (NKAD) and 161–169 (GPSGVGKSS) contribute to the GTP site. Positions 243, 248, 250, and 256 each coordinate Zn(2+).

It belongs to the TRAFAC class YlqF/YawG GTPase family. RsgA subfamily. In terms of assembly, monomer. Associates with 30S ribosomal subunit, binds 16S rRNA. Requires Zn(2+) as cofactor.

Its subcellular location is the cytoplasm. In terms of biological role, one of several proteins that assist in the late maturation steps of the functional core of the 30S ribosomal subunit. Helps release RbfA from mature subunits. May play a role in the assembly of ribosomal proteins into the subunit. Circularly permuted GTPase that catalyzes slow GTP hydrolysis, GTPase activity is stimulated by the 30S ribosomal subunit. In Moorella thermoacetica (strain ATCC 39073 / JCM 9320), this protein is Small ribosomal subunit biogenesis GTPase RsgA.